The sequence spans 45 residues: DQPVERHAGNKRHLNPTIRRAMIIDANRREKCCEVGWCDSGCECC.

Positions 1 to 31 are excised as a propeptide; it reads DQPVERHAGNKRHLNPTIRRAMIIDANRREK. 3 disulfides stabilise this stretch: Cys-32/Cys-44, Cys-33/Cys-42, and Cys-38/Cys-45.

It belongs to the conotoxin M superfamily. In terms of tissue distribution, expressed by the venom duct.

The protein localises to the secreted. This chain is Conotoxin reg3.12, found in Conus regius (Crown cone).